The sequence spans 139 residues: NADPH-dependent 7-cyano-7-deazaguanine reductase (139 aa).

Cysteine 34 acts as the Thioimide intermediate in catalysis. Catalysis depends on aspartate 41, which acts as the Proton donor. Residues 56 to 58 and 75 to 76 contribute to the substrate site; these read IEL and HE.

The protein belongs to the GTP cyclohydrolase I family. QueF type 1 subfamily.

It localises to the cytoplasm. It carries out the reaction 7-aminomethyl-7-carbaguanine + 2 NADP(+) = 7-cyano-7-deazaguanine + 2 NADPH + 3 H(+). The protein operates within tRNA modification; tRNA-queuosine biosynthesis. In terms of biological role, catalyzes the NADPH-dependent reduction of 7-cyano-7-deazaguanine (preQ0) to 7-aminomethyl-7-deazaguanine (preQ1). The polypeptide is NADPH-dependent 7-cyano-7-deazaguanine reductase (Nitrosomonas europaea (strain ATCC 19718 / CIP 103999 / KCTC 2705 / NBRC 14298)).